The following is a 99-amino-acid chain: DASH complex subunit DAD1 (99 aa).

The tract at residues 69–99 is disordered; sequence GMNHQTRENTRDENNKISSSDTEDENNNNKI. Positions 73–83 are enriched in basic and acidic residues; sequence QTRENTRDENN. Over residues 89–99 the composition is skewed to acidic residues; it reads DTEDENNNNKI.

It belongs to the DASH complex DAD1 family. As to quaternary structure, component of the DASH complex consisting of ASK1, DAD1, DAD2, DAD3, DAD4, DAM1, DUO1, HSK3, SPC19 and SPC34, with a stoichiometry of one copy of each subunit per complex. Multiple DASH complexes oligomerize to form a ring that encircles spindle microtubules and organizes the rod-like NDC80 complexes of the outer kinetochore. DASH complex oligomerization strengthens microtubule attachments. On cytoplasmic microtubules, DASH complexes appear to form patches instead of rings.

It is found in the chromosome. Its subcellular location is the centromere. The protein resides in the kinetochore. It localises to the cytoplasm. The protein localises to the cytoskeleton. It is found in the spindle. Its subcellular location is the nucleus. Its function is as follows. Component of the DASH complex that connects microtubules with kinetochores and couples microtubule depolymerisation to chromosome movement; it is involved in retrieving kinetochores to the spindle poles before their re-orientation on the spindle in early mitosis and allows microtubule depolymerization to pull chromosomes apart and resist detachment during anaphase. Kinetochores, consisting of a centromere-associated inner segment and a microtubule-contacting outer segment, play a crucial role in chromosome segregation by mediating the physical connection between centromeric DNA and microtubules. Kinetochores also serve as an input point for the spindle assembly checkpoint, which delays anaphase until all chromosomes have bioriented on the mitotic spindle. In Candida albicans (strain SC5314 / ATCC MYA-2876) (Yeast), this protein is DASH complex subunit DAD1.